A 320-amino-acid polypeptide reads, in one-letter code: uncharacterized protein (320 aa).

An N-terminal signal peptide occupies residues 1 to 23 (MKLNLRFPSYFLPVVAASAFLVS). Cysteine 24 carries the N-palmitoyl cysteine lipid modification. Cysteine 24 is lipidated: S-diacylglycerol cysteine. A disordered region spans residues 160–181 (KNHEHGHTHKNGETHEHDHDHH).

The protein localises to the cell membrane. This is an uncharacterized protein from Mycoplasma pneumoniae (strain ATCC 29342 / M129 / Subtype 1) (Mycoplasmoides pneumoniae).